The following is a 412-amino-acid chain: Propionate kinase (412 aa).

It belongs to the acetokinase family. PduW subfamily.

Its subcellular location is the cytoplasm. The enzyme catalyses propanoate + ATP = propanoyl phosphate + ADP. It functions in the pathway polyol metabolism; 1,2-propanediol degradation. Functionally, works with phosphate acetyltransferase (pta) to capture exogenous propionate and regenerate propionyl-CoA during degradation of 1,2-propanediol (1,2-PD). This chain is Propionate kinase, found in Yersinia enterocolitica serotype O:8 / biotype 1B (strain NCTC 13174 / 8081).